Consider the following 321-residue polypeptide: Manganese-dependent ADP-ribose/CDP-alcohol diphosphatase (321 aa).

The Zn(2+) site is built by Asp25, Gln27, Asp72, Asn107, His226, His263, and His265.

This sequence belongs to the ADPRibase-Mn family. Monomer. The cofactor is Mg(2+).

It carries out the reaction CDP-choline + H2O = phosphocholine + CMP + 2 H(+). The catalysed reaction is ADP-D-ribose + H2O = D-ribose 5-phosphate + AMP + 2 H(+). The enzyme catalyses CDP-glycerol + H2O = sn-glycerol 3-phosphate + CMP + 2 H(+). In terms of biological role, hydrolyzes ADP-ribose, IDP-ribose, CDP-glycerol, CDP-choline and CDP-ethanolamine, but not other non-reducing ADP-sugars or CDP-glucose. In Oryza sativa subsp. japonica (Rice), this protein is Manganese-dependent ADP-ribose/CDP-alcohol diphosphatase.